The following is a 193-amino-acid chain: Acyl carrier protein phosphodiesterase (193 aa).

The protein belongs to the AcpH family.

The enzyme catalyses holo-[ACP] + H2O = apo-[ACP] + (R)-4'-phosphopantetheine + H(+). Functionally, converts holo-ACP to apo-ACP by hydrolytic cleavage of the phosphopantetheine prosthetic group from ACP. This is Acyl carrier protein phosphodiesterase from Shigella boydii serotype 18 (strain CDC 3083-94 / BS512).